The primary structure comprises 198 residues: Thioredoxin reductase-like selenoprotein T homolog CG3887 (198 aa).

The first 25 residues, 1-25 (MERLTGRNVALLVLCLCAGYALVFA), serve as a signal peptide directing secretion. Residues cysteine 49 and cysteine 52 are joined by a disulfide bond.

Belongs to the SelWTH family. SELT subfamily.

It catalyses the reaction [thioredoxin]-dithiol + NADP(+) = [thioredoxin]-disulfide + NADPH + H(+). Functionally, probably has thioredoxin reductase-like oxidoreductase activity. The sequence is that of Thioredoxin reductase-like selenoprotein T homolog CG3887 from Drosophila melanogaster (Fruit fly).